The chain runs to 107 residues: Latency-related protein 2 (107 aa).

Positions methionine 1–threonine 44 are enriched in pro residues. The interval methionine 1–threonine 63 is disordered. 3 repeat units span residues alanine 2–histidine 17, alanine 18–histidine 33, and alanine 34–histidine 49. A 3 X 17 AA tandem repeats region spans residues alanine 2–histidine 49. A compositionally biased stretch (basic residues) spans proline 46–arginine 58.

The protein is Latency-related protein 2 of Homo sapiens (Human).